The primary structure comprises 347 residues: Holliday junction branch migration complex subunit RuvB (347 aa).

Residues 1–183 (MSEERFVSGH…FGVVLQLQFY (183 aa)) are large ATPase domain (RuvB-L). Residues L22, R23, G64, K67, T68, T69, 130 to 132 (EDF), R173, Y183, and R220 each bind ATP. T68 is a binding site for Mg(2+). The segment at 184-254 (SEEELTRILM…VADAGLRMMG (71 aa)) is small ATPAse domain (RuvB-S). Positions 257-347 (AMGLDTVDHK…PEGPVQPRLF (91 aa)) are head domain (RuvB-H). The DNA site is built by R312 and R317.

The protein belongs to the RuvB family. Homohexamer. Forms an RuvA(8)-RuvB(12)-Holliday junction (HJ) complex. HJ DNA is sandwiched between 2 RuvA tetramers; dsDNA enters through RuvA and exits via RuvB. An RuvB hexamer assembles on each DNA strand where it exits the tetramer. Each RuvB hexamer is contacted by two RuvA subunits (via domain III) on 2 adjacent RuvB subunits; this complex drives branch migration. In the full resolvosome a probable DNA-RuvA(4)-RuvB(12)-RuvC(2) complex forms which resolves the HJ.

It is found in the cytoplasm. The enzyme catalyses ATP + H2O = ADP + phosphate + H(+). The RuvA-RuvB-RuvC complex processes Holliday junction (HJ) DNA during genetic recombination and DNA repair, while the RuvA-RuvB complex plays an important role in the rescue of blocked DNA replication forks via replication fork reversal (RFR). RuvA specifically binds to HJ cruciform DNA, conferring on it an open structure. The RuvB hexamer acts as an ATP-dependent pump, pulling dsDNA into and through the RuvAB complex. RuvB forms 2 homohexamers on either side of HJ DNA bound by 1 or 2 RuvA tetramers; 4 subunits per hexamer contact DNA at a time. Coordinated motions by a converter formed by DNA-disengaged RuvB subunits stimulates ATP hydrolysis and nucleotide exchange. Immobilization of the converter enables RuvB to convert the ATP-contained energy into a lever motion, pulling 2 nucleotides of DNA out of the RuvA tetramer per ATP hydrolyzed, thus driving DNA branch migration. The RuvB motors rotate together with the DNA substrate, which together with the progressing nucleotide cycle form the mechanistic basis for DNA recombination by continuous HJ branch migration. Branch migration allows RuvC to scan DNA until it finds its consensus sequence, where it cleaves and resolves cruciform DNA. This is Holliday junction branch migration complex subunit RuvB from Symbiobacterium thermophilum (strain DSM 24528 / JCM 14929 / IAM 14863 / T).